Here is a 282-residue protein sequence, read N- to C-terminus: Probable endonuclease 4 (282 aa).

9 residues coordinate Zn(2+): H69, H109, E145, D179, H182, H216, D229, H231, and E261.

This sequence belongs to the AP endonuclease 2 family. Requires Zn(2+) as cofactor.

The enzyme catalyses Endonucleolytic cleavage to 5'-phosphooligonucleotide end-products.. Its function is as follows. Endonuclease IV plays a role in DNA repair. It cleaves phosphodiester bonds at apurinic or apyrimidinic (AP) sites, generating a 3'-hydroxyl group and a 5'-terminal sugar phosphate. This chain is Probable endonuclease 4, found in Campylobacter hominis (strain ATCC BAA-381 / DSM 21671 / CCUG 45161 / LMG 19568 / NCTC 13146 / CH001A).